Consider the following 79-residue polypeptide: ATP synthase subunit c (79 aa).

Transmembrane regions (helical) follow at residues 11-31 (IAAAIMMGLSAIGAAVGIGIL) and 53-73 (FFIVMGLVDAIPMITVGLSLY).

This sequence belongs to the ATPase C chain family. F-type ATPases have 2 components, F(1) - the catalytic core - and F(0) - the membrane proton channel. F(1) has five subunits: alpha(3), beta(3), gamma(1), delta(1), epsilon(1). F(0) has three main subunits: a(1), b(2) and c(10-14). The alpha and beta chains form an alternating ring which encloses part of the gamma chain. F(1) is attached to F(0) by a central stalk formed by the gamma and epsilon chains, while a peripheral stalk is formed by the delta and b chains.

Its subcellular location is the cell inner membrane. Its function is as follows. F(1)F(0) ATP synthase produces ATP from ADP in the presence of a proton or sodium gradient. F-type ATPases consist of two structural domains, F(1) containing the extramembraneous catalytic core and F(0) containing the membrane proton channel, linked together by a central stalk and a peripheral stalk. During catalysis, ATP synthesis in the catalytic domain of F(1) is coupled via a rotary mechanism of the central stalk subunits to proton translocation. In terms of biological role, key component of the F(0) channel; it plays a direct role in translocation across the membrane. A homomeric c-ring of between 10-14 subunits forms the central stalk rotor element with the F(1) delta and epsilon subunits. The polypeptide is ATP synthase subunit c (Blochmanniella floridana).